The sequence spans 601 residues: Beta-phellandrene synthase (601 aa).

The transit peptide at 1–35 (MSTISIHHVGILRNPLPSKNKRALINNPWSLSLPR) directs the protein to the chloroplast. Positions 356 and 360 each coordinate Mn(2+). Positions 356 to 360 (DDVYD) match the DDXXD motif motif. Homodimerization stretches follow at residues 362-368 (YGTLDEL) and 434-471 (EAKW…LSIP). Mn(2+) is bound by residues Asp499 and Glu507.

This sequence belongs to the terpene synthase family. As to quaternary structure, homodimer. Mn(2+) is required as a cofactor. It depends on Mg(2+) as a cofactor. In terms of tissue distribution, expressed in peltate glandular trichomes. Present at low levels in flowers, leaves and stems.

It localises to the plastid. The protein localises to the chloroplast. The catalysed reaction is (2E)-geranyl diphosphate = beta-phellandrene + diphosphate. The enzyme catalyses (2E)-geranyl diphosphate = (1R,5R)-sabinene + diphosphate. It participates in secondary metabolite biosynthesis; terpenoid biosynthesis. In terms of biological role, involved in the biosynthesis of phenolic monoterpenes natural products. Monoterpene synthase that catalyzes mainly the formation of olefins such as sabinene and beta-phellandrene, and minor amounts of other monoterpenes (e.g. myrcene, gamma-terpinene, alpha-thujene and alpha-pinene) from geranyl diphosphate (GPP). This Origanum vulgare (Wild marjoram) protein is Beta-phellandrene synthase.